The primary structure comprises 127 residues: Large ribosomal subunit protein bL17 (127 aa).

It belongs to the bacterial ribosomal protein bL17 family. As to quaternary structure, part of the 50S ribosomal subunit. Contacts protein L32.

In Xanthomonas axonopodis pv. citri (strain 306), this protein is Large ribosomal subunit protein bL17.